Reading from the N-terminus, the 88-residue chain is Sec-independent protein translocase protein TatA (88 aa).

Residues 1–21 (MGGASIWHWIVVGVIVMLLFG) traverse the membrane as a helical segment. The disordered stretch occupies residues 62–88 (TEPVRTLPPHPTEPAPATHATVDRKVV).

The protein belongs to the TatA/E family. The Tat system comprises two distinct complexes: a TatABC complex, containing multiple copies of TatA, TatB and TatC subunits, and a separate TatA complex, containing only TatA subunits. Substrates initially bind to the TatABC complex, which probably triggers association of the separate TatA complex to form the active translocon.

The protein localises to the cell inner membrane. Functionally, part of the twin-arginine translocation (Tat) system that transports large folded proteins containing a characteristic twin-arginine motif in their signal peptide across membranes. TatA could form the protein-conducting channel of the Tat system. The polypeptide is Sec-independent protein translocase protein TatA (Methylobacterium sp. (strain 4-46)).